The chain runs to 417 residues: Gamma-glutamyl phosphate reductase (417 aa).

This sequence belongs to the gamma-glutamyl phosphate reductase family.

It is found in the cytoplasm. The catalysed reaction is L-glutamate 5-semialdehyde + phosphate + NADP(+) = L-glutamyl 5-phosphate + NADPH + H(+). The protein operates within amino-acid biosynthesis; L-proline biosynthesis; L-glutamate 5-semialdehyde from L-glutamate: step 2/2. Its function is as follows. Catalyzes the NADPH-dependent reduction of L-glutamate 5-phosphate into L-glutamate 5-semialdehyde and phosphate. The product spontaneously undergoes cyclization to form 1-pyrroline-5-carboxylate. This Escherichia coli O7:K1 (strain IAI39 / ExPEC) protein is Gamma-glutamyl phosphate reductase.